The sequence spans 139 residues: Insulin-like growth factor (139 aa).

A signal peptide spans 1-38; it reads YIRRVRQGSIYSLLVESQQWCKLTLTLLLLLALLTRCT. The interval 39-67 is b; sequence LSETLCGSELVDTLQFVCDDRGFFFVPQH. The tract at residues 68–82 is c; that stretch reads VPPRRGAHRRSRARK. The interval 83-103 is a; that stretch reads GIVEECCFKGCSLRLLEMYCA. The d stretch occupies residues 104-113; the sequence is RPSKAERDVA. The segment at 108 to 139 is disordered; sequence AERDVARPRQRPHRASQHSRRGSQSRGRGRSR. The tract at residues 114–139 is e; sequence RPRQRPHRASQHSRRGSQSRGRGRSR. Residues 115–139 show a composition bias toward basic residues; the sequence is PRQRPHRASQHSRRGSQSRGRGRSR.

The protein belongs to the insulin family.

The protein localises to the secreted. The insulin-like growth factors, isolated from plasma, are structurally and functionally related to insulin but have a much higher growth-promoting activity. The sequence is that of Insulin-like growth factor from Myxine glutinosa (Atlantic hagfish).